Reading from the N-terminus, the 273-residue chain is MSIYFISDIHGCYKEFKLLLKKSFFNDKKDFLWIAGDLVSRGPDSLKVIRYLYSLRKRIKIILGNHDLNLIAVYSGVKENKKENYFDEFLSAKDNLQLINWLRCQSILKIDEERKIIMSHAGISPKWDIDTAKKYALEIEKCLSGKNYSSFLRSVFNNKINYWNLNLNKLDRLRYSINVFTRMRYCYPDSRLNLICKKSPNLVKYPLIPWFKIPNKIPKEYSVFFGHWSSLIGTKVPQPFFPLDSGCCWGGKLTMFRWEDKKYFFQSFQKNNS.

Belongs to the Ap4A hydrolase family.

The enzyme catalyses P(1),P(4)-bis(5'-adenosyl) tetraphosphate + H2O = 2 ADP + 2 H(+). Functionally, hydrolyzes diadenosine 5',5'''-P1,P4-tetraphosphate to yield ADP. This is Bis(5'-nucleosyl)-tetraphosphatase, symmetrical (apaH) from Buchnera aphidicola subsp. Schizaphis graminum (strain Sg).